The primary structure comprises 466 residues: Ornithine decarboxylase (466 aa).

N6-(pyridoxal phosphate)lysine is present on K116. Pyridoxal 5'-phosphate-binding positions include S247, G286, and 318-321 (EPGR). Position 362-363 (362-363 (FD)) interacts with substrate. The Proton donor; shared with dimeric partner role is filled by C411. Residue D412 participates in substrate binding. A pyridoxal 5'-phosphate-binding site is contributed by Y441.

The protein belongs to the Orn/Lys/Arg decarboxylase class-II family. Homodimer. Only the dimer is catalytically active, as the active sites are constructed of residues from both monomers. Requires pyridoxal 5'-phosphate as cofactor.

The protein resides in the cytoplasm. The enzyme catalyses L-ornithine + H(+) = putrescine + CO2. The protein operates within amine and polyamine biosynthesis; putrescine biosynthesis via L-ornithine pathway; putrescine from L-ornithine: step 1/1. Inhibited by antizyme (AZ) OAZ1 in response to polyamine levels. AZ inhibits the assembly of the functional homodimer by binding to ODC monomers and targeting them for ubiquitin-independent proteolytic destruction by the 26S proteasome. In terms of biological role, catalyzes the first and rate-limiting step of polyamine biosynthesis that converts ornithine into putrescine, which is the precursor for the polyamines, spermidine and spermine. Polyamines are essential for cell proliferation and are implicated in cellular processes, ranging from DNA replication to apoptosis. The polypeptide is Ornithine decarboxylase (Saccharomyces cerevisiae (strain ATCC 204508 / S288c) (Baker's yeast)).